The primary structure comprises 521 residues: Membrane-bound transcription factor site-2 protease (521 aa).

The Cytoplasmic segment spans residues 1–3 (MIP). Residues 4–24 (VSLVVVVVGGWTVVYLTDLVL) form a helical membrane-spanning segment. Over 25–74 (KSSVYFKHSYEDWLESNGLSISPFHIRWQTAVFNRAFYSWGRRKARMLYQ) the chain is Lumenal. 2 consecutive transmembrane segments (helical) span residues 75 to 95 (WFNFGMVFGVIAMFSSFFLLG) and 96 to 107 (KTLMQTLAQMMA). At 108–146 (DSPSSYSSSSSSSSSSSSSSSSSSSSSSSSSLHNEQVLQ) the chain is on the lumenal side. The disordered stretch occupies residues 113–137 (YSSSSSSSSSSSSSSSSSSSSSSSS). The chain crosses the membrane as a helical span at residues 147–171 (VVVPGINLPVNQLTYFFAAVLISGV). His173 provides a ligand contact to Zn(2+). Glu174 is a catalytic residue. A run of 3 helical transmembrane segments spans residues 176–188 (GHGIAAIREQVRF), 189–211 (NGFGIFLFIIYPGAFVDLFTTHL), and 231–253 (FVLALLGILALVLLPVILLPFYY). His177 lines the Zn(2+) pocket. The Lumenal segment spans residues 254 to 448 (TGVGVLITEV…LPVVVETFVK (195 aa)). N-linked (GlcNAc...) asparagine glycosylation occurs at Asn339. 2 consecutive transmembrane segments (helical) span residues 449–466 (YLISLSGALAIVNAVPCF) and 467–478 (ALDGQWILNSFL). The Lumenal segment spans residues 479 to 494 (DATLTSVIGDNDVKDL). Residues 495–515 (IGFFILLGGSVLLAANVTLGL) traverse the membrane as a helical segment. The Cytoplasmic segment spans residues 516-521 (WMVTAR).

Belongs to the peptidase M50A family. Zn(2+) is required as a cofactor.

Its subcellular location is the membrane. It is found in the cytoplasm. The protein localises to the golgi apparatus membrane. It carries out the reaction Cleaves several transcription factors that are type-2 transmembrane proteins within membrane-spanning domains. Known substrates include sterol regulatory element-binding protein (SREBP) -1, SREBP-2 and forms of the transcriptional activator ATF6. SREBP-2 is cleaved at the site 477-DRSRILL-|-CVLTFLCLSFNPLTSLLQWGGA-505. The residues Asn-Pro, 11 residues distal to the site of cleavage in the membrane-spanning domain, are important for cleavage by S2P endopeptidase. Replacement of either of these residues does not prevent cleavage, but there is no cleavage if both of these residues are replaced.. In terms of biological role, zinc metalloprotease that mediates intramembrane proteolysis of proteins such as ATF6, ATF6B, SREBF1/SREBP1 and SREBF2/SREBP2. Catalyzes the second step in the proteolytic activation of the sterol regulatory element-binding proteins (SREBPs) SREBF1/SREBP1 and SREBF2/SREBP2: cleaves SREBPs within the first transmembrane segment, thereby releasing the N-terminal segment with a portion of the transmembrane segment attached. Mature N-terminal SREBP fragments shuttle to the nucleus and activate gene transcription. Also mediates the second step in the proteolytic activation of the cyclic AMP-dependent transcription factor ATF-6 (ATF6 and ATF6B). Involved in intramembrane proteolysis during bone formation. In astrocytes and osteoblasts, upon DNA damage and ER stress, mediates the second step of the regulated intramembrane proteolytic activation of the transcription factor CREB3L1, leading to the inhibition of cell-cycle progression. This Pongo abelii (Sumatran orangutan) protein is Membrane-bound transcription factor site-2 protease (MBTPS2).